We begin with the raw amino-acid sequence, 327 residues long: Polyprenyl transferase esdpC (327 aa).

The next 8 membrane-spanning stretches (helical) occupy residues 35–54, 73–93, 118–138, 140–160, 171–191, 202–222, 239–259, and 307–327; these read YNPL…AGAS, LLVF…NDWI, EALI…AYTL, GHNV…YPFG, YPQY…WLAI, IMES…LNTA, VYFL…ALVL, and ENFA…LLKS.

Belongs to the UbiA prenyltransferase family. The cofactor is Mg(2+).

Its subcellular location is the membrane. Its pathway is secondary metabolite biosynthesis; terpenoid biosynthesis. Functionally, olyprenyl transferase; part of the cluster that mediates the biosynthesis of shearones, diterpenoid pyrones (DPs) which are structurally diverse meroterpenoids consisting of a diterpene linked by a pyrone, and which may exhibit a range of bioactivities. Within the pathway, esdpC takes part to the biosynthesis of the molecular scaffold by catalyzing the C-3 geranylgeranylation reaction of the alpha-pyrone produced by esdpA. The molecular scaffold is commonly biosynthesized by a series of enzymes including the non-reducing polyketide synthase (NR-PKS) esdpA that generates an alpha-pyrone; the prenyltransferase esdpC that attaches a geranylgeranyl pyrophosphate (GGPP) produced by the GGPP synthase (GGPPS) esdpD onto the pyrone unit; the FAD-dependent monooxygenase esdpE that converts an olefin on the diterpene unit into an epoxide; and the terpene cyclase esdpB that catalyzes the cyclization reactions to give the molecular backbone shearone A. In the modification steps, esdpF oxidizes the hydroxy group to a ketone at C-3 and esdpG then attaches hydroxy groups at both C-11 and C-12. After that, esdpI hydroxylates at C-20 and esdpH hydroxylates at C-6'. The ether bridge is generated by nucleophilic attack of the hydroxy group at C-20 to the carbonyl carbon at C-3. EsdpH can also functions prior to esdpI. The different combinations of these modification enzymes lead to the production of diverse shearone derivatives, shearone I being the end product of the pathway. The alpha-ketoglutarate-dependent dioxygenase esdpJ seems not to be involved in this pathway. The sequence is that of Polyprenyl transferase esdpC from Penicillium shearii (Eupenicillium shearii).